A 392-amino-acid chain; its full sequence is Protein O-glucosyltransferase 1 (392 aa).

Positions M1 to G23 are cleaved as a signal peptide. 4 disulfides stabilise this stretch: C49–C56, C54–C357, C102–C108, and C263–C286. N53 carries N-linked (GlcNAc...) asparagine glycosylation. Residues M103 to R107 form an interaction with the consensus sequence C-X-S-X-[PA]-C in peptide substrates region. D133 serves as the catalytic Proton donor/acceptor. Residues A172–P178 are interaction with the consensus sequence C-X-S-X-[PA]-C in peptide substrates. A UDP-alpha-D-glucose-binding site is contributed by Y177. A glycan (N-linked (GlcNAc...) asparagine) is linked at N204. Residues S212, R218, and V274–R279 each bind UDP-alpha-D-glucose. N373 is a glycosylation site (N-linked (GlcNAc...) asparagine). The Prevents secretion from ER signature appears at K389–L392.

This sequence belongs to the glycosyltransferase 90 family.

Its subcellular location is the endoplasmic reticulum lumen. It catalyses the reaction L-seryl-[EGF-like domain protein] + UDP-alpha-D-xylose = 3-O-(beta-D-xylosyl)-L-seryl-[EGF-like domain protein] + UDP + H(+). The catalysed reaction is L-seryl-[EGF-like domain protein] + UDP-alpha-D-glucose = 3-O-(beta-D-glucosyl)-L-seryl-[EGF-like domain protein] + UDP + H(+). Its pathway is protein modification; protein glycosylation. In terms of biological role, dual specificity glycosyltransferase that catalyzes the transfer of glucose and xylose from UDP-glucose and UDP-xylose, respectively, to a serine residue found in the consensus sequence of C-X-S-X-P-C. Specifically targets extracellular EGF repeats of protein such as CRB2, F7, F9 and NOTCH2. Acts as a positive regulator of Notch signaling by mediating O-glucosylation of Notch, leading to regulate muscle development. Notch glucosylation does not affect Notch ligand binding. Required during early development to promote gastrulation: acts by mediating O-glucosylation of CRB2, which is required for CRB2 localization to the cell membrane. The sequence is that of Protein O-glucosyltransferase 1 (POGLUT1) from Bos taurus (Bovine).